The primary structure comprises 137 residues: Ribosome-binding factor A (137 aa).

This sequence belongs to the RbfA family. In terms of assembly, monomer. Binds 30S ribosomal subunits, but not 50S ribosomal subunits or 70S ribosomes.

It is found in the cytoplasm. One of several proteins that assist in the late maturation steps of the functional core of the 30S ribosomal subunit. Associates with free 30S ribosomal subunits (but not with 30S subunits that are part of 70S ribosomes or polysomes). Required for efficient processing of 16S rRNA. May interact with the 5'-terminal helix region of 16S rRNA. This Trichodesmium erythraeum (strain IMS101) protein is Ribosome-binding factor A.